A 435-amino-acid polypeptide reads, in one-letter code: Probable exopolygalacturonase B (435 aa).

The signal sequence occupies residues 1–15 (MKFFTAALFASAVSA). Residues asparagine 59, asparagine 184, and asparagine 224 are each glycosylated (N-linked (GlcNAc...) asparagine). The Proton donor role is filled by aspartate 254. A disulfide bond links cysteine 256 and cysteine 273. N-linked (GlcNAc...) asparagine glycosylation is found at asparagine 262 and asparagine 274. Histidine 277 is an active-site residue. N-linked (GlcNAc...) asparagine glycans are attached at residues asparagine 301, asparagine 328, asparagine 365, and asparagine 368. Cysteine 391 and cysteine 397 are joined by a disulfide.

It belongs to the glycosyl hydrolase 28 family.

It localises to the secreted. The catalysed reaction is [(1-&gt;4)-alpha-D-galacturonosyl](n) + H2O = alpha-D-galacturonate + [(1-&gt;4)-alpha-D-galacturonosyl](n-1). In terms of biological role, specific in hydrolyzing the terminal glycosidic bond of polygalacturonic acid and oligogalacturonates. This Aspergillus terreus (strain NIH 2624 / FGSC A1156) protein is Probable exopolygalacturonase B (pgxB).